The following is a 214-amino-acid chain: Pyridoxine/pyridoxamine 5'-phosphate oxidase (214 aa).

Residues 9-12 (RKNY) and Lys67 contribute to the substrate site. Residues 62–67 (RIVLLK), 77–78 (YT), Lys83, Lys84, and Gln106 each bind FMN. Tyr124, Arg128, and Ser132 together coordinate substrate. FMN is bound by residues 141–142 (QS) and Trp186. Substrate is bound at residue 192–194 (RLH). Arg196 is an FMN binding site.

Belongs to the pyridoxamine 5'-phosphate oxidase family. In terms of assembly, homodimer. It depends on FMN as a cofactor.

The catalysed reaction is pyridoxamine 5'-phosphate + O2 + H2O = pyridoxal 5'-phosphate + H2O2 + NH4(+). It carries out the reaction pyridoxine 5'-phosphate + O2 = pyridoxal 5'-phosphate + H2O2. It functions in the pathway cofactor metabolism; pyridoxal 5'-phosphate salvage; pyridoxal 5'-phosphate from pyridoxamine 5'-phosphate: step 1/1. It participates in cofactor metabolism; pyridoxal 5'-phosphate salvage; pyridoxal 5'-phosphate from pyridoxine 5'-phosphate: step 1/1. Functionally, catalyzes the oxidation of either pyridoxine 5'-phosphate (PNP) or pyridoxamine 5'-phosphate (PMP) into pyridoxal 5'-phosphate (PLP). In Leptospira borgpetersenii serovar Hardjo-bovis (strain JB197), this protein is Pyridoxine/pyridoxamine 5'-phosphate oxidase.